Here is a 1486-residue protein sequence, read N- to C-terminus: Chromosome partition protein MukB (1486 aa).

An ATP-binding site is contributed by 34-41; sequence GGNGAGKS. Coiled coils occupy residues 326 to 418, 444 to 480, and 509 to 603; these read LEAD…QYNQ, LETF…QAYQ, and RHLA…RAPV. Residues 666–783 are flexible hinge; it reads PGGSEDQRLN…EVPLFGRAAR (118 aa). Coiled coils occupy residues 835 to 923, 977 to 1115, and 1209 to 1266; these read EAEI…AKLE, EMLS…TAKA, and VEAI…QNVS.

The protein belongs to the SMC family. MukB subfamily. Homodimerization via its hinge domain. Binds to DNA via its C-terminal region. Interacts, and probably forms a ternary complex, with MukE and MukF via its C-terminal region. The complex formation is stimulated by calcium or magnesium. Interacts with tubulin-related protein FtsZ.

It localises to the cytoplasm. The protein resides in the nucleoid. In terms of biological role, plays a central role in chromosome condensation, segregation and cell cycle progression. Functions as a homodimer, which is essential for chromosome partition. Involved in negative DNA supercoiling in vivo, and by this means organize and compact chromosomes. May achieve or facilitate chromosome segregation by condensation DNA from both sides of a centrally located replisome during cell division. The protein is Chromosome partition protein MukB of Escherichia coli (strain K12 / MC4100 / BW2952).